Here is a 304-residue protein sequence, read N- to C-terminus: Uricase (304 aa).

At A2 the chain carries N-acetylalanine. Residues K10 and K23 each carry the N6-acetyllysine; alternate modification. 2 positions are modified to N6-succinyllysine; alternate: K10 and K23. K23 acts as the Charge relay system in catalysis. N6-acetyllysine occurs at positions 27 and 36. Phosphoserine is present on residues S39 and S63. Residue T68 is the Charge relay system of the active site. 2 residues coordinate urate: T68 and D69. Residues K118, K122, and K164 each carry the N6-acetyllysine modification. Position 170 (F170) interacts with urate. An N6-acetyllysine mark is found at K175 and K185. A urate-binding site is contributed by R187. Residues K221 and K228 each carry the N6-acetyllysine; alternate modification. N6-succinyllysine; alternate occurs at positions 221 and 228. Position 232 is a phosphoserine (S232). Positions 235, 236, and 262 each coordinate urate. The active-site Charge relay system is the H264. K278 is subject to N6-acetyllysine. At Y289 the chain carries Phosphotyrosine. The Microbody targeting signal motif lies at 302-304 (SKL).

Belongs to the uricase family.

It localises to the peroxisome. It carries out the reaction urate + O2 + H2O = 5-hydroxyisourate + H2O2. It participates in purine metabolism; urate degradation; (S)-allantoin from urate: step 1/3. In terms of biological role, catalyzes the oxidation of uric acid to 5-hydroxyisourate, which is further processed to form (S)-allantoin. The chain is Uricase (UOX) from Canis lupus familiaris (Dog).